The chain runs to 206 residues: RNA pyrophosphohydrolase (206 aa).

The Nudix hydrolase domain maps to 6-149; sequence GYRPNVGIVL…KRGVYARALR (144 aa). Positions 38–59 match the Nudix box motif; sequence GGMNTDETPVEAMYRELQEETG. Residues 175–206 form a disordered region; sequence MPGHTAGHDRPRKRPRSRGYWPKKAQGDVPPT.

This sequence belongs to the Nudix hydrolase family. RppH subfamily. Requires a divalent metal cation as cofactor.

Functionally, accelerates the degradation of transcripts by removing pyrophosphate from the 5'-end of triphosphorylated RNA, leading to a more labile monophosphorylated state that can stimulate subsequent ribonuclease cleavage. This chain is RNA pyrophosphohydrolase, found in Stenotrophomonas maltophilia (strain R551-3).